We begin with the raw amino-acid sequence, 411 residues long: Diaminobutyrate--2-oxoglutarate transaminase (411 aa).

Lys262 is modified (N6-(pyridoxal phosphate)lysine).

Belongs to the class-III pyridoxal-phosphate-dependent aminotransferase family. The cofactor is pyridoxal 5'-phosphate.

The enzyme catalyses L-2,4-diaminobutanoate + 2-oxoglutarate = L-aspartate 4-semialdehyde + L-glutamate. The protein operates within amine and polyamine biosynthesis; ectoine biosynthesis; L-ectoine from L-aspartate 4-semialdehyde: step 1/3. Its function is as follows. Catalyzes reversively the conversion of L-aspartate beta-semialdehyde (ASA) to L-2,4-diaminobutyrate (DABA) by transamination with L-glutamate. The sequence is that of Diaminobutyrate--2-oxoglutarate transaminase (ectB) from Vibrio cholerae serotype O1 (strain ATCC 39315 / El Tor Inaba N16961).